The chain runs to 431 residues: Translation initiation factor 2 subunit gamma (431 aa).

A tr-type G domain is found at 26–223 (QPCVNIGMVG…ALETQIPTPS (198 aa)). Residues 35 to 42 (GHVDHGKT) are G1. Mg(2+) contacts are provided by Asp38, Thr42, Gly63, and Ser65. Residue 38 to 43 (DHGKTT) participates in GTP binding. The segment at 63–67 (GISIR) is G2. Residues Cys78, Cys81, Cys93, and Cys96 each coordinate Zn(2+). The segment at 110–113 (DAPG) is G3. Residues 166-169 (NKID) and 201-203 (SAQ) contribute to the GTP site. The segment at 166–169 (NKID) is G4. Residues 201 to 203 (SAQ) are G5.

Belongs to the TRAFAC class translation factor GTPase superfamily. Classic translation factor GTPase family. EIF2G subfamily. Heterotrimer composed of an alpha, a beta and a gamma chain. It depends on Mg(2+) as a cofactor.

It catalyses the reaction GTP + H2O = GDP + phosphate + H(+). Its function is as follows. eIF-2 functions in the early steps of protein synthesis by forming a ternary complex with GTP and initiator tRNA. The sequence is that of Translation initiation factor 2 subunit gamma from Methanosarcina mazei (strain ATCC BAA-159 / DSM 3647 / Goe1 / Go1 / JCM 11833 / OCM 88) (Methanosarcina frisia).